The sequence spans 23 residues: Protein YsaE (23 aa).

This is Protein YsaE from Escherichia coli (strain K12).